Reading from the N-terminus, the 381-residue chain is tRNA N6-adenosine threonylcarbamoyltransferase (381 aa).

Fe cation-binding residues include histidine 114 and histidine 118. Residues valine 142–glycine 146, aspartate 178, glycine 191, aspartate 195, and asparagine 321 contribute to the substrate site. Fe cation is bound at residue aspartate 349.

This sequence belongs to the KAE1 / TsaD family. It depends on Fe(2+) as a cofactor.

It localises to the cytoplasm. The catalysed reaction is L-threonylcarbamoyladenylate + adenosine(37) in tRNA = N(6)-L-threonylcarbamoyladenosine(37) in tRNA + AMP + H(+). In terms of biological role, required for the formation of a threonylcarbamoyl group on adenosine at position 37 (t(6)A37) in tRNAs that read codons beginning with adenine. Is involved in the transfer of the threonylcarbamoyl moiety of threonylcarbamoyl-AMP (TC-AMP) to the N6 group of A37, together with TsaE and TsaB. TsaD likely plays a direct catalytic role in this reaction. In Koribacter versatilis (strain Ellin345), this protein is tRNA N6-adenosine threonylcarbamoyltransferase.